Consider the following 121-residue polypeptide: Large ribosomal subunit protein bL19 (121 aa).

It belongs to the bacterial ribosomal protein bL19 family.

Its function is as follows. This protein is located at the 30S-50S ribosomal subunit interface and may play a role in the structure and function of the aminoacyl-tRNA binding site. The polypeptide is Large ribosomal subunit protein bL19 (Porphyromonas gingivalis (strain ATCC BAA-308 / W83)).